The following is a 130-amino-acid chain: RutC family protein in leuC 5'region (130 aa).

Belongs to the RutC family.

This chain is RutC family protein in leuC 5'region, found in Leuconostoc mesenteroides subsp. cremoris.